The following is a 213-amino-acid chain: N-(5'-phosphoribosyl)anthranilate isomerase (213 aa).

Belongs to the TrpF family.

It catalyses the reaction N-(5-phospho-beta-D-ribosyl)anthranilate = 1-(2-carboxyphenylamino)-1-deoxy-D-ribulose 5-phosphate. The protein operates within amino-acid biosynthesis; L-tryptophan biosynthesis; L-tryptophan from chorismate: step 3/5. This is N-(5'-phosphoribosyl)anthranilate isomerase from Leptospira interrogans serogroup Icterohaemorrhagiae serovar copenhageni (strain Fiocruz L1-130).